The following is a 418-amino-acid chain: MIDLKFLRENPDAVRESQRTRGEDPALVDALLEADASRRAAVLAGDNLRAEQKAFGKKVGQASPEERPALLEGSKELAAKVKQAEAEQHEAQAALDAAHRAISNVVQEGAPAGGEDDFVTLETVGDIPAFDFEPKDHLELGESLGLIDMERGAKVSGARFYFLTGFGAMLQLGMLQLAAQKAMANGFQMMIPPVLVRPEIMAGTGFLGAHADEVYHLADDDLYLVGTSEVPLAGYHSGEILDLADGPKRYAGWSTCFRREAGSYGKDTRGIIRVHQFDKVEMFTYCKPEDADAEHQRLLAWEREMLAAIDVPYRVIDVAGGDLGSSAARKFDCEAWVPTQQAYRELTSTSNCTTFQARRLGVRYRDENGKPQTAATLNGTLATTRWIVAILENHQQSDGTVRVPEALVPFVGTDVLKP.

Residue 227 to 229 participates in L-serine binding; it reads TSE. Residues 258–260 and Val274 each bind ATP; that span reads RRE. An L-serine-binding site is contributed by Glu281. 345–348 is a binding site for ATP; sequence ELTS. Residue Thr380 participates in L-serine binding.

The protein belongs to the class-II aminoacyl-tRNA synthetase family. Type-1 seryl-tRNA synthetase subfamily. Homodimer. The tRNA molecule binds across the dimer.

The protein resides in the cytoplasm. The enzyme catalyses tRNA(Ser) + L-serine + ATP = L-seryl-tRNA(Ser) + AMP + diphosphate + H(+). It catalyses the reaction tRNA(Sec) + L-serine + ATP = L-seryl-tRNA(Sec) + AMP + diphosphate + H(+). It functions in the pathway aminoacyl-tRNA biosynthesis; selenocysteinyl-tRNA(Sec) biosynthesis; L-seryl-tRNA(Sec) from L-serine and tRNA(Sec): step 1/1. In terms of biological role, catalyzes the attachment of serine to tRNA(Ser). Is also able to aminoacylate tRNA(Sec) with serine, to form the misacylated tRNA L-seryl-tRNA(Sec), which will be further converted into selenocysteinyl-tRNA(Sec). The polypeptide is Serine--tRNA ligase (Rhodococcus jostii (strain RHA1)).